The following is a 216-amino-acid chain: Ion-translocating oxidoreductase complex subunit G (216 aa).

The helical transmembrane segment at 14–34 threads the bilayer; it reads ALVLGSFGFLAASFVSIIYVI. Thr-181 carries the post-translational modification FMN phosphoryl threonine.

The protein belongs to the RnfG family. The complex is composed of six subunits: RnfA, RnfB, RnfC, RnfD, RnfE and RnfG. It depends on FMN as a cofactor.

The protein resides in the cell inner membrane. In terms of biological role, part of a membrane-bound complex that couples electron transfer with translocation of ions across the membrane. This chain is Ion-translocating oxidoreductase complex subunit G, found in Buchnera aphidicola subsp. Baizongia pistaciae (strain Bp).